The following is a 381-amino-acid chain: Succinyl-diaminopimelate desuccinylase (381 aa).

His-68 is a binding site for Zn(2+). Residue Asp-70 is part of the active site. Zn(2+) is bound at residue Asp-101. Catalysis depends on Glu-135, which acts as the Proton acceptor. Glu-136, Glu-164, and His-350 together coordinate Zn(2+).

The protein belongs to the peptidase M20A family. DapE subfamily. In terms of assembly, homodimer. Requires Zn(2+) as cofactor. Co(2+) is required as a cofactor.

The catalysed reaction is N-succinyl-(2S,6S)-2,6-diaminopimelate + H2O = (2S,6S)-2,6-diaminopimelate + succinate. It participates in amino-acid biosynthesis; L-lysine biosynthesis via DAP pathway; LL-2,6-diaminopimelate from (S)-tetrahydrodipicolinate (succinylase route): step 3/3. Catalyzes the hydrolysis of N-succinyl-L,L-diaminopimelic acid (SDAP), forming succinate and LL-2,6-diaminopimelate (DAP), an intermediate involved in the bacterial biosynthesis of lysine and meso-diaminopimelic acid, an essential component of bacterial cell walls. The sequence is that of Succinyl-diaminopimelate desuccinylase from Neisseria meningitidis serogroup C / serotype 2a (strain ATCC 700532 / DSM 15464 / FAM18).